A 163-amino-acid polypeptide reads, in one-letter code: MAKDNSFDIVSEMNLEEVKNAIQIAEKEILNRYDFKGSKSEMSLDNGDLVLISDDDYKLEQLKDVLITKLIKRGVPTKNLDYQKVENALGGTVRQRVKLKSGIDKDDAKKINNAIKESKLKVKSQIQDDQIRVTGKSRDDLQAVMQLVRELELSVDAQFTNFR.

This sequence belongs to the YajQ family.

Its function is as follows. Nucleotide-binding protein. The chain is Nucleotide-binding protein EAT1b_2037 from Exiguobacterium sp. (strain ATCC BAA-1283 / AT1b).